We begin with the raw amino-acid sequence, 535 residues long: CTP synthase (535 aa).

Residues 1-267 (MTKYIFVTGG…DKLVCDHMKL (267 aa)) form an amidoligase domain region. Residue Ser-13 participates in CTP binding. Ser-13 contributes to the UTP binding site. 14 to 19 (SLGKGI) is an ATP binding site. Residue Tyr-54 participates in L-glutamine binding. Position 71 (Asp-71) interacts with ATP. Mg(2+) is bound by residues Asp-71 and Glu-141. Residues 148–150 (DIE), 188–193 (KTKPTQ), and Lys-224 each bind CTP. Residues 188–193 (KTKPTQ) and Lys-224 each bind UTP. A Glutamine amidotransferase type-1 domain is found at 292 to 534 (TISLVGKYVE…IGASVQAAEQ (243 aa)). An L-glutamine-binding site is contributed by Gly-354. Residue Cys-381 is the Nucleophile; for glutamine hydrolysis of the active site. Residues 382-385 (LGMQ), Glu-405, and Arg-462 each bind L-glutamine. Catalysis depends on residues His-507 and Glu-509.

This sequence belongs to the CTP synthase family. In terms of assembly, homotetramer.

It catalyses the reaction UTP + L-glutamine + ATP + H2O = CTP + L-glutamate + ADP + phosphate + 2 H(+). The enzyme catalyses L-glutamine + H2O = L-glutamate + NH4(+). The catalysed reaction is UTP + NH4(+) + ATP = CTP + ADP + phosphate + 2 H(+). Its pathway is pyrimidine metabolism; CTP biosynthesis via de novo pathway; CTP from UDP: step 2/2. With respect to regulation, allosterically activated by GTP, when glutamine is the substrate; GTP has no effect on the reaction when ammonia is the substrate. The allosteric effector GTP functions by stabilizing the protein conformation that binds the tetrahedral intermediate(s) formed during glutamine hydrolysis. Inhibited by the product CTP, via allosteric rather than competitive inhibition. Functionally, catalyzes the ATP-dependent amination of UTP to CTP with either L-glutamine or ammonia as the source of nitrogen. Regulates intracellular CTP levels through interactions with the four ribonucleotide triphosphates. This is CTP synthase from Bacillus velezensis (strain DSM 23117 / BGSC 10A6 / LMG 26770 / FZB42) (Bacillus amyloliquefaciens subsp. plantarum).